The chain runs to 559 residues: MAFSLSENPRLLNCLDSDIPALSTCSNADTFSRMNTMLGNSLDLSGVCTTPTAKCKRDPFNGRPDSDLSAVRSRMLFLSGGQDSSRGLPDVSNWGLGLQSLSLSDWERPWSSHDSDPSAQTNTASLHGILGTPSHLSNRLPSYSEPSIGATDFLERFPGMARLNSQSFLDSHSISPVDSETSGFSSGSDHLSDLLSSLRISPSVPFLMSSMQRDPLKLALGSRLDHSSSPLTPPPSATSSGGLSHRWPGASIWPNWDLMKTPESPFSIEREAWLHRQAASINEATFTWSGQLPPRHYQNPIYSCKVFLGGVPWDITEAGLINTFKCYGPLSVEWPGKDGKHPRCPPKGNMPKGYVYLVFESDKSVRALLQDCTEDLLHPEGYSEYYFKMSSRRMRCKDAQVIPWVISDSNYVSCPSQRLDPRNTVFVGALHGMLNAEALASIMNDLFGGVVYAGIDTDKHKYPIGSGRVTFNNQRSYLKAVSAAFVEIKTPKFTKKVQIDPYLEDAICQSCSREPGPFFCRDKTCFKYYCRSCWHRQHSMDILSNHRPLMRNQKKRDVN.

Positions 223-244 are disordered; sequence RLDHSSSPLTPPPSATSSGGLS. RRM domains are found at residues 304–401 and 423–504; these read CKVF…DAQV and NTVF…PYLE. Positions 508, 511, 520, 525, 530, 533, 538, and 546 each coordinate Zn(2+).

This sequence belongs to the RRM CPEB family. As to quaternary structure, interacts with kinesin, dynein, APLP1, APLP2, TENT2/GLD2 and APP. Both phosphorylated and non phosphorylated forms interact with APLP1. Interacts with TENT4B; the interaction is required for TENT4B-mediated translational control.

It localises to the cytoplasm. Functionally, sequence-specific RNA-binding protein that regulates mRNA cytoplasmic polyadenylation and translation initiation during oocyte maturation and early development. Binds to the cytoplasmic polyadenylation element (CPE), an uridine-rich sequence element (consensus sequence 5'-UUUUUAU-3') within the mRNA 3'-UTR. This is Cytoplasmic polyadenylation element-binding protein 1 (cpeb1) from Carassius auratus (Goldfish).